The chain runs to 272 residues: 2-succinyl-6-hydroxy-2,4-cyclohexadiene-1-carboxylate synthase (272 aa).

It belongs to the AB hydrolase superfamily. MenH family. As to quaternary structure, monomer.

It catalyses the reaction 5-enolpyruvoyl-6-hydroxy-2-succinyl-cyclohex-3-ene-1-carboxylate = (1R,6R)-6-hydroxy-2-succinyl-cyclohexa-2,4-diene-1-carboxylate + pyruvate. It participates in quinol/quinone metabolism; 1,4-dihydroxy-2-naphthoate biosynthesis; 1,4-dihydroxy-2-naphthoate from chorismate: step 3/7. It functions in the pathway quinol/quinone metabolism; menaquinone biosynthesis. In terms of biological role, catalyzes a proton abstraction reaction that results in 2,5-elimination of pyruvate from 2-succinyl-5-enolpyruvyl-6-hydroxy-3-cyclohexene-1-carboxylate (SEPHCHC) and the formation of 2-succinyl-6-hydroxy-2,4-cyclohexadiene-1-carboxylate (SHCHC). This chain is 2-succinyl-6-hydroxy-2,4-cyclohexadiene-1-carboxylate synthase, found in Yersinia pestis bv. Antiqua (strain Nepal516).